The chain runs to 287 residues: Ret finger protein-like 4A-like protein 1 (287 aa).

The RING-type; degenerate zinc-finger motif lies at 11 to 53 (CPVCLKDLEEAVQLKCGYACCLQCLNSLQKEPDGEGLLCRFCS). In terms of domain architecture, B30.2/SPRY spans 78-276 (EPKLKSVLTM…LSICSVINPS (199 aa)).

This Homo sapiens (Human) protein is Ret finger protein-like 4A-like protein 1 (RFPL4AL1).